Reading from the N-terminus, the 193-residue chain is Ion-translocating oxidoreductase complex subunit A (193 aa).

6 consecutive transmembrane segments (helical) span residues Leu5–Leu25, Ile39–Val59, Leu67–Phe87, Leu102–Leu122, Ile134–Met154, and Ser171–Val191.

The protein belongs to the NqrDE/RnfAE family. As to quaternary structure, the complex is composed of six subunits: RnfA, RnfB, RnfC, RnfD, RnfE and RnfG.

It is found in the cell inner membrane. In terms of biological role, part of a membrane-bound complex that couples electron transfer with translocation of ions across the membrane. The sequence is that of Ion-translocating oxidoreductase complex subunit A from Vibrio cholerae serotype O1 (strain ATCC 39315 / El Tor Inaba N16961).